The primary structure comprises 244 residues: Ubiquinone biosynthesis O-methyltransferase (244 aa).

Residues arginine 36, glycine 60, aspartate 81, and leucine 123 each contribute to the S-adenosyl-L-methionine site.

The protein belongs to the methyltransferase superfamily. UbiG/COQ3 family.

It catalyses the reaction a 3-demethylubiquinol + S-adenosyl-L-methionine = a ubiquinol + S-adenosyl-L-homocysteine + H(+). It carries out the reaction a 3-(all-trans-polyprenyl)benzene-1,2-diol + S-adenosyl-L-methionine = a 2-methoxy-6-(all-trans-polyprenyl)phenol + S-adenosyl-L-homocysteine + H(+). Its pathway is cofactor biosynthesis; ubiquinone biosynthesis. Functionally, O-methyltransferase that catalyzes the 2 O-methylation steps in the ubiquinone biosynthetic pathway. The protein is Ubiquinone biosynthesis O-methyltransferase of Rickettsia felis (strain ATCC VR-1525 / URRWXCal2) (Rickettsia azadi).